The following is a 188-amino-acid chain: Crossover junction endodeoxyribonuclease RuvC (188 aa).

Residues D14, E74, and D149 contribute to the active site. Positions 14, 74, and 149 each coordinate Mg(2+).

It belongs to the RuvC family. Homodimer which binds Holliday junction (HJ) DNA. The HJ becomes 2-fold symmetrical on binding to RuvC with unstacked arms; it has a different conformation from HJ DNA in complex with RuvA. In the full resolvosome a probable DNA-RuvA(4)-RuvB(12)-RuvC(2) complex forms which resolves the HJ. Mg(2+) is required as a cofactor.

The protein localises to the cytoplasm. It catalyses the reaction Endonucleolytic cleavage at a junction such as a reciprocal single-stranded crossover between two homologous DNA duplexes (Holliday junction).. Its function is as follows. The RuvA-RuvB-RuvC complex processes Holliday junction (HJ) DNA during genetic recombination and DNA repair. Endonuclease that resolves HJ intermediates. Cleaves cruciform DNA by making single-stranded nicks across the HJ at symmetrical positions within the homologous arms, yielding a 5'-phosphate and a 3'-hydroxyl group; requires a central core of homology in the junction. The consensus cleavage sequence is 5'-(A/T)TT(C/G)-3'. Cleavage occurs on the 3'-side of the TT dinucleotide at the point of strand exchange. HJ branch migration catalyzed by RuvA-RuvB allows RuvC to scan DNA until it finds its consensus sequence, where it cleaves and resolves the cruciform DNA. The protein is Crossover junction endodeoxyribonuclease RuvC of Bacteroides fragilis (strain ATCC 25285 / DSM 2151 / CCUG 4856 / JCM 11019 / LMG 10263 / NCTC 9343 / Onslow / VPI 2553 / EN-2).